Consider the following 543-residue polypeptide: uncharacterized protein (543 aa).

Residues 1-59 enclose the TRAM domain; the sequence is MLKKNDIVEVEIVDLTHEGAGVAKVDGLVFFVENALPSEKILMRVLKVNKKIGFGKVEK. Residues Gln-283, Tyr-312, Glu-333, and Asp-381 each contribute to the S-adenosyl-L-methionine site. Cys-408 (nucleophile) is an active-site residue.

The protein belongs to the class I-like SAM-binding methyltransferase superfamily. RNA M5U methyltransferase family.

This is an uncharacterized protein from Streptococcus pneumoniae serotype 4 (strain ATCC BAA-334 / TIGR4).